Consider the following 155-residue polypeptide: SsrA-binding protein (155 aa).

This sequence belongs to the SmpB family.

It localises to the cytoplasm. Its function is as follows. Required for rescue of stalled ribosomes mediated by trans-translation. Binds to transfer-messenger RNA (tmRNA), required for stable association of tmRNA with ribosomes. tmRNA and SmpB together mimic tRNA shape, replacing the anticodon stem-loop with SmpB. tmRNA is encoded by the ssrA gene; the 2 termini fold to resemble tRNA(Ala) and it encodes a 'tag peptide', a short internal open reading frame. During trans-translation Ala-aminoacylated tmRNA acts like a tRNA, entering the A-site of stalled ribosomes, displacing the stalled mRNA. The ribosome then switches to translate the ORF on the tmRNA; the nascent peptide is terminated with the 'tag peptide' encoded by the tmRNA and targeted for degradation. The ribosome is freed to recommence translation, which seems to be the essential function of trans-translation. This chain is SsrA-binding protein, found in Lactococcus lactis subsp. cremoris (strain MG1363).